The primary structure comprises 154 residues: SsrA-binding protein (154 aa).

This sequence belongs to the SmpB family.

The protein localises to the cytoplasm. Functionally, required for rescue of stalled ribosomes mediated by trans-translation. Binds to transfer-messenger RNA (tmRNA), required for stable association of tmRNA with ribosomes. tmRNA and SmpB together mimic tRNA shape, replacing the anticodon stem-loop with SmpB. tmRNA is encoded by the ssrA gene; the 2 termini fold to resemble tRNA(Ala) and it encodes a 'tag peptide', a short internal open reading frame. During trans-translation Ala-aminoacylated tmRNA acts like a tRNA, entering the A-site of stalled ribosomes, displacing the stalled mRNA. The ribosome then switches to translate the ORF on the tmRNA; the nascent peptide is terminated with the 'tag peptide' encoded by the tmRNA and targeted for degradation. The ribosome is freed to recommence translation, which seems to be the essential function of trans-translation. The chain is SsrA-binding protein from Enterococcus hirae (strain ATCC 9790 / DSM 20160 / JCM 8729 / LMG 6399 / NBRC 3181 / NCIMB 6459 / NCDO 1258 / NCTC 12367 / WDCM 00089 / R).